A 489-amino-acid chain; its full sequence is Glutamyl-tRNA(Gln) amidotransferase subunit A (489 aa).

Active-site charge relay system residues include Lys77 and Ser157. Ser181 serves as the catalytic Acyl-ester intermediate.

It belongs to the amidase family. GatA subfamily. Heterotrimer of A, B and C subunits.

The enzyme catalyses L-glutamyl-tRNA(Gln) + L-glutamine + ATP + H2O = L-glutaminyl-tRNA(Gln) + L-glutamate + ADP + phosphate + H(+). Allows the formation of correctly charged Gln-tRNA(Gln) through the transamidation of misacylated Glu-tRNA(Gln) in organisms which lack glutaminyl-tRNA synthetase. The reaction takes place in the presence of glutamine and ATP through an activated gamma-phospho-Glu-tRNA(Gln). This Caulobacter vibrioides (strain ATCC 19089 / CIP 103742 / CB 15) (Caulobacter crescentus) protein is Glutamyl-tRNA(Gln) amidotransferase subunit A.